Consider the following 383-residue polypeptide: Guanine nucleotide-binding protein G(s) subunit alpha (383 aa).

The tract at residues 1–31 is disordered; it reads MGCFGSAGSKQSDSNSSEDTKSQKRRSDAIT. The N-palmitoyl glycine moiety is linked to residue G2. Residue C3 is the site of S-palmitoyl cysteine attachment. Residues 8–17 are compositionally biased toward polar residues; it reads GSKQSDSNSS. Over residues 18 to 31 the composition is skewed to basic and acidic residues; that stretch reads EDTKSQKRRSDAIT. Residues 43 to 383 enclose the G-alpha domain; it reads ATHRLLLLGA…RMHLRQYELL (341 aa). The interval 46–59 is G1 motif; sequence RLLLLGAGESGKST. Residues 51-58, 187-193, 212-216, 281-284, and A355 each bind GTP; these read GAGESGKS, LRCRVLT, DVGGQ, and NKQD. Mg(2+) contacts are provided by S58 and T193. Residues 185 to 193 are G2 motif; the sequence is DILRCRVLT. The G3 motif stretch occupies residues 208–217; the sequence is FHMFDVGGQR. The interval 277 to 284 is G4 motif; sequence ILFLNKQD. The tract at residues 353-358 is G5 motif; it reads TCAVDT.

This sequence belongs to the G-alpha family. G(s) subfamily. As to quaternary structure, g proteins are composed of 3 units; alpha, beta and gamma. The alpha chain contains the guanine nucleotide binding site.

In terms of biological role, guanine nucleotide-binding proteins (G proteins) are involved as modulators or transducers in various transmembrane signaling systems. The G(s) protein is involved in hormonal regulation of adenylate cyclase: it activates the cyclase. Participates in olfactory signal transduction. This is Guanine nucleotide-binding protein G(s) subunit alpha from Anopheles gambiae (African malaria mosquito).